Reading from the N-terminus, the 268-residue chain is 4-hydroxy-tetrahydrodipicolinate reductase (268 aa).

NAD(+) contacts are provided by residues 10–15, aspartate 36, 99–101, and 123–126; these read GASGRM, GTT, and APNM. Histidine 156 serves as the catalytic Proton donor/acceptor. Position 157 (histidine 157) interacts with (S)-2,3,4,5-tetrahydrodipicolinate. Lysine 160 (proton donor) is an active-site residue. Residue 166–167 coordinates (S)-2,3,4,5-tetrahydrodipicolinate; sequence GT.

It belongs to the DapB family.

It is found in the cytoplasm. The catalysed reaction is (S)-2,3,4,5-tetrahydrodipicolinate + NAD(+) + H2O = (2S,4S)-4-hydroxy-2,3,4,5-tetrahydrodipicolinate + NADH + H(+). The enzyme catalyses (S)-2,3,4,5-tetrahydrodipicolinate + NADP(+) + H2O = (2S,4S)-4-hydroxy-2,3,4,5-tetrahydrodipicolinate + NADPH + H(+). The protein operates within amino-acid biosynthesis; L-lysine biosynthesis via DAP pathway; (S)-tetrahydrodipicolinate from L-aspartate: step 4/4. Catalyzes the conversion of 4-hydroxy-tetrahydrodipicolinate (HTPA) to tetrahydrodipicolinate. This is 4-hydroxy-tetrahydrodipicolinate reductase from Janthinobacterium sp. (strain Marseille) (Minibacterium massiliensis).